The sequence spans 211 residues: Ras-related protein Rab-38 (211 aa).

10 residues coordinate GTP: G19, V20, G21, K22, T23, S24, S35, S36, Y38, and T41. T23 serves as a coordination point for Mg(2+). The Switch 1 motif lies at 32–46; it reads QNFSSHYRATIGVDF. Mg(2+) is bound by residues T41 and D65. 5 residues coordinate GTP: G68, K128, D130, A160, and K161. Positions 68 to 81 match the Switch 2 motif; it reads GQERFGNMTRVYYR. A lipid anchor (S-palmitoyl cysteine) is attached at C205. A lipid anchor (S-geranylgeranyl cysteine) is attached at C208.

The protein belongs to the small GTPase superfamily. Rab family. Interacts with ANKRD27. Mg(2+) is required as a cofactor.

It localises to the cell membrane. It is found in the cytoplasmic vesicle. Its subcellular location is the phagosome. The protein resides in the phagosome membrane. The protein localises to the melanosome. It localises to the melanosome membrane. The catalysed reaction is GTP + H2O = GDP + phosphate + H(+). Its activity is regulated as follows. Regulated by guanine nucleotide exchange factors (GEFs) including the BLOC-3 complex composed of HPS1 and HPS4 which promote the exchange of bound GDP for free GTP. Regulated by GTPase activating proteins (GAPs) including SGSM2 which increase the GTP hydrolysis activity. Inhibited by GDP dissociation inhibitors (GDIs). The small GTPases Rab are key regulators of intracellular membrane trafficking, from the formation of transport vesicles to their fusion with membranes. Rabs cycle between an inactive GDP-bound form and an active GTP-bound form that is able to recruit to membranes different sets of downstream effectors directly responsible for vesicle formation, movement, tethering and fusion. RAB38 plays a role in the maturation of phagosomes that engulf pathogens, such as S.aureus and Mycobacterium. May be involved in melanosomal transport and docking. Involved in the proper sorting of TYRP1. Involved in peripheral melanosomal distribution of TYRP1 in melanocytes; the function, which probably is implicating vesicle-trafficking, includes cooperation with ANKRD27 and VAMP7. Plays an important role in the control of melanin production and melanosome biogenesis. In concert with RAB32, regulates the proper trafficking of melanogenic enzymes TYR, TYRP1 and DCT/TYRP2 to melanosomes in melanocytes. This is Ras-related protein Rab-38 from Mus musculus (Mouse).